A 261-amino-acid chain; its full sequence is Kallikrein 1-related peptidase b8 (261 aa).

An N-terminal signal peptide occupies residues 1–18 (MRFLILFLALSLGGIDAA). A propeptide spans 19–24 (PPLQSR) (activation peptide). In terms of domain architecture, Peptidase S1 spans 25-258 (VVGGFNCEKN…FNSWIKDTMT (234 aa)). Disulfide bonds link Cys-31-Cys-173, Cys-50-Cys-66, Cys-152-Cys-219, Cys-184-Cys-198, and Cys-209-Cys-234. Residue His-65 is the Charge relay system of the active site. The N-linked (GlcNAc...) asparagine glycan is linked to Asn-102. Asp-120 (charge relay system) is an active-site residue. The active-site Charge relay system is the Ser-213.

It belongs to the peptidase S1 family. Kallikrein subfamily.

It catalyses the reaction Preferential cleavage of Arg-|-Xaa bonds in small molecule substrates. Highly selective action to release kallidin (lysyl-bradykinin) from kininogen involves hydrolysis of Met-|-Xaa or Leu-|-Xaa.. Its function is as follows. Glandular kallikreins cleave Met-Lys and Arg-Ser bonds in kininogen to release Lys-bradykinin. This chain is Kallikrein 1-related peptidase b8 (Klk1b8), found in Mus musculus (Mouse).